The chain runs to 299 residues: Mitochondrial 2-oxodicarboxylate carrier (299 aa).

3 Solcar repeats span residues Asn-11–Leu-100, Ser-107–Ile-196, and Leu-205–Trp-294. The next 6 helical transmembrane spans lie at Ile-17–Val-37, Met-62–Ala-82, Leu-100–Gly-120, His-179–Val-199, Phe-211–Ala-231, and Ile-274–Tyr-290.

Belongs to the mitochondrial carrier (TC 2.A.29) family.

It localises to the mitochondrion inner membrane. It carries out the reaction 2-oxoadipate(in) + 2-oxoglutarate(out) = 2-oxoadipate(out) + 2-oxoglutarate(in). The catalysed reaction is hexanedioate(in) + 2-oxoglutarate(out) = hexanedioate(out) + 2-oxoglutarate(in). It catalyses the reaction L-2-aminoadipate(in) + 2-oxoglutarate(out) = L-2-aminoadipate(out) + 2-oxoglutarate(in). The enzyme catalyses glutarate(in) + 2-oxoglutarate(out) = glutarate(out) + 2-oxoglutarate(in). It carries out the reaction 2-oxoheptanedioate(in) + 2-oxoglutarate(out) = 2-oxoheptanedioate(out) + 2-oxoglutarate(in). The catalysed reaction is heptanedioate(in) + 2-oxoglutarate(out) = heptanedioate(out) + 2-oxoglutarate(in). It catalyses the reaction citrate(in) + 2-oxoglutarate(out) = citrate(out) + 2-oxoglutarate(in). In terms of biological role, transports dicarboxylates across the inner membranes of mitochondria by a counter-exchange mechanism. Can transport 2-oxoadipate (2-oxohexanedioate), 2-oxoglutarate, adipate (hexanedioate), glutarate, and to a lesser extent, pimelate (heptanedioate), 2-oxopimelate (2-oxoheptanedioate), 2-aminoadipate (2-aminohexanedioate), oxaloacetate, and citrate. Plays a central role in catabolism of lysine, hydroxylysine, and tryptophan, by transporting common metabolite intermediates (such as 2-oxoadipate) into the mitochondria, where it is converted into acetyl-CoA and can enter the citric acid (TCA) cycle. In Bos taurus (Bovine), this protein is Mitochondrial 2-oxodicarboxylate carrier (SLC25A21).